The sequence spans 398 residues: ORC1-type DNA replication protein 1 (398 aa).

ATP contacts are provided by residues 67-71 (TGKTA), Tyr-208, and Arg-220.

This sequence belongs to the CDC6/cdc18 family.

Functionally, involved in regulation of DNA replication. This is ORC1-type DNA replication protein 1 (cdc6-1) from Sulfurisphaera tokodaii (strain DSM 16993 / JCM 10545 / NBRC 100140 / 7) (Sulfolobus tokodaii).